Reading from the N-terminus, the 314-residue chain is Glutathione synthetase (314 aa).

The region spanning glutamate 125–glutamate 311 is the ATP-grasp domain. Phenylalanine 151–glycine 208 provides a ligand contact to ATP. Glutamate 282 and asparagine 284 together coordinate Mg(2+).

This sequence belongs to the prokaryotic GSH synthase family. It depends on Mg(2+) as a cofactor. The cofactor is Mn(2+).

It catalyses the reaction gamma-L-glutamyl-L-cysteine + glycine + ATP = glutathione + ADP + phosphate + H(+). It participates in sulfur metabolism; glutathione biosynthesis; glutathione from L-cysteine and L-glutamate: step 2/2. This Xylella fastidiosa (strain 9a5c) protein is Glutathione synthetase.